The sequence spans 180 residues: ATP-dependent protease subunit HslV (180 aa).

T8 is an active-site residue. Residues G165, D168, and T171 each contribute to the Na(+) site.

The protein belongs to the peptidase T1B family. HslV subfamily. A double ring-shaped homohexamer of HslV is capped on each side by a ring-shaped HslU homohexamer. The assembly of the HslU/HslV complex is dependent on binding of ATP.

It localises to the cytoplasm. It carries out the reaction ATP-dependent cleavage of peptide bonds with broad specificity.. Allosterically activated by HslU binding. In terms of biological role, protease subunit of a proteasome-like degradation complex believed to be a general protein degrading machinery. This is ATP-dependent protease subunit HslV from Lactiplantibacillus plantarum (strain ATCC BAA-793 / NCIMB 8826 / WCFS1) (Lactobacillus plantarum).